The sequence spans 1024 residues: Beta-galactosidase (1024 aa).

2 residues coordinate substrate: asparagine 103 and aspartate 202. Residue aspartate 202 coordinates Na(+). Mg(2+)-binding residues include glutamate 417, histidine 419, and glutamate 462. Substrate-binding positions include glutamate 462 and 538-541 (EYAH). Residue glutamate 462 is the Proton donor of the active site. Glutamate 538 acts as the Nucleophile in catalysis. Mg(2+) is bound at residue asparagine 598. Positions 602 and 605 each coordinate Na(+). Asparagine 605 and tryptophan 1000 together coordinate substrate.

The protein belongs to the glycosyl hydrolase 2 family. As to quaternary structure, homotetramer. The cofactor is Mg(2+). Na(+) is required as a cofactor.

It carries out the reaction Hydrolysis of terminal non-reducing beta-D-galactose residues in beta-D-galactosides.. The chain is Beta-galactosidase from Escherichia coli O6:K15:H31 (strain 536 / UPEC).